The chain runs to 176 residues: Shikimate kinase (176 aa).

14 to 19 contacts ATP; it reads GAGKST. Ser18 contributes to the Mg(2+) binding site. Asp36, Arg60, and Gly83 together coordinate substrate. Arg121 is an ATP binding site. Arg140 lines the substrate pocket.

This sequence belongs to the shikimate kinase family. As to quaternary structure, monomer. Requires Mg(2+) as cofactor.

It is found in the cytoplasm. It carries out the reaction shikimate + ATP = 3-phosphoshikimate + ADP + H(+). Its pathway is metabolic intermediate biosynthesis; chorismate biosynthesis; chorismate from D-erythrose 4-phosphate and phosphoenolpyruvate: step 5/7. Functionally, catalyzes the specific phosphorylation of the 3-hydroxyl group of shikimic acid using ATP as a cosubstrate. This Francisella tularensis subsp. tularensis (strain FSC 198) protein is Shikimate kinase.